The sequence spans 29 residues: Protein YldA (29 aa).

Residues F5–L25 traverse the membrane as a helical segment.

The protein resides in the cell inner membrane. The chain is Protein YldA from Escherichia coli (strain K12).